The chain runs to 611 residues: Angiotensin-converting enzyme (611 aa).

Positions 1-17 are cleaved as a signal peptide; sequence MKLLVVTILAGLAVCHG. The Peptidase M2 domain maps to 19–607; that stretch reads TKEEIVATEY…VESLCHQRYK (589 aa). N53 is a glycosylation site (N-linked (GlcNAc...) asparagine). C133 and C141 are joined by a disulfide. Residue N196 is glycosylated (N-linked (GlcNAc...) asparagine). C336 and C354 are oxidised to a cystine. H367 contributes to the Zn(2+) binding site. E368 acts as the Proton acceptor in catalysis. Zn(2+)-binding residues include H371 and E395. Catalysis depends on H497, which acts as the Proton donor. Cysteines 522 and 540 form a disulfide. N-linked (GlcNAc...) asparagine glycosylation occurs at N531.

This sequence belongs to the peptidase M2 family. Requires Zn(2+) as cofactor. Expressed in the compound ganglion and in the posterior region of the midgut.

The protein localises to the secreted. The protein resides in the extracellular space. The enzyme catalyses Release of a C-terminal dipeptide, oligopeptide-|-Xaa-Yaa, when Xaa is not Pro, and Yaa is neither Asp nor Glu. Thus, conversion of angiotensin I to angiotensin II, with increase in vasoconstrictor activity, but no action on angiotensin II.. In terms of biological role, involved in the specific maturation or degradation of a number of bioactive peptides. This chain is Angiotensin-converting enzyme (ACE), found in Haematobia irritans exigua (Buffalo fly).